A 329-amino-acid polypeptide reads, in one-letter code: DNA polymerase III subunit delta' (329 aa).

Component of the DNA clamp loading complex consisting of tau(3):delta(1):delta'(1). The DNA polymerase III holoenzyme complex contains at least 10 different subunits organized into 3 functionally essential subassemblies: the Pol III core, the beta sliding clamp processivity factor and the clamp-loading complex. The Pol III core (subunits alpha, epsilon and theta) contains the polymerase and the 3'-5' exonuclease proofreading activities. The polymerase is tethered to the template via the dimeric beta sliding clamp processivity factor. The DNA clamp-loading complex assembles the beta sliding clamp onto the primed template and plays a central role in the organization and communication at the replication fork.

It localises to the cytoplasm. The protein resides in the nucleoid. The enzyme catalyses DNA(n) + a 2'-deoxyribonucleoside 5'-triphosphate = DNA(n+1) + diphosphate. Functionally, DNA polymerase III is a complex, multichain enzyme responsible for most of the replicative synthesis in bacteria. The chain is DNA polymerase III subunit delta' (holB) from Bacillus subtilis (strain 168).